Consider the following 114-residue polypeptide: Mobility group protein 1A (114 aa).

Positions 5–71 (PKRPLSAYML…EYEKAMKEFE (67 aa)) form a DNA-binding region, HMG box. The disordered stretch occupies residues 69–114 (EFERNGGDKSSGASTKKRGKAAEKKKPAKKSKKKDSEDDEEEDESD). Residues 105–114 (EDDEEEDESD) show a composition bias toward acidic residues.

Belongs to the HMGB family.

Its subcellular location is the nucleus. It is found in the chromosome. In terms of biological role, found in condensed chromomeres. Binds preferentially to AT-rich DNA. The protein is Mobility group protein 1A (HMG1A) of Chironomus tentans (Midge).